Reading from the N-terminus, the 367-residue chain is Phosphoribosylaminoimidazole-succinocarboxamide synthase (367 aa).

The protein belongs to the SAICAR synthetase family.

The catalysed reaction is 5-amino-1-(5-phospho-D-ribosyl)imidazole-4-carboxylate + L-aspartate + ATP = (2S)-2-[5-amino-1-(5-phospho-beta-D-ribosyl)imidazole-4-carboxamido]succinate + ADP + phosphate + 2 H(+). It participates in purine metabolism; IMP biosynthesis via de novo pathway; 5-amino-1-(5-phospho-D-ribosyl)imidazole-4-carboxamide from 5-amino-1-(5-phospho-D-ribosyl)imidazole-4-carboxylate: step 1/2. The protein is Phosphoribosylaminoimidazole-succinocarboxamide synthase of Psychromonas ingrahamii (strain DSM 17664 / CCUG 51855 / 37).